Reading from the N-terminus, the 847-residue chain is Leucine--tRNA ligase (847 aa).

The short motif at proline 41–histidine 51 is the 'HIGH' region element. A 'KMSKS' region motif is present at residues lysine 619–serine 623. Residue lysine 622 coordinates ATP.

Belongs to the class-I aminoacyl-tRNA synthetase family.

It is found in the cytoplasm. The catalysed reaction is tRNA(Leu) + L-leucine + ATP = L-leucyl-tRNA(Leu) + AMP + diphosphate. The polypeptide is Leucine--tRNA ligase (Cereibacter sphaeroides (strain ATCC 17029 / ATH 2.4.9) (Rhodobacter sphaeroides)).